Reading from the N-terminus, the 486-residue chain is UDP-N-acetylmuramate--L-alanine ligase (486 aa).

Residue 123 to 129 (GTHGKTT) participates in ATP binding.

It belongs to the MurCDEF family.

It is found in the cytoplasm. The enzyme catalyses UDP-N-acetyl-alpha-D-muramate + L-alanine + ATP = UDP-N-acetyl-alpha-D-muramoyl-L-alanine + ADP + phosphate + H(+). The protein operates within cell wall biogenesis; peptidoglycan biosynthesis. Functionally, cell wall formation. In Pseudomonas savastanoi pv. phaseolicola (strain 1448A / Race 6) (Pseudomonas syringae pv. phaseolicola (strain 1448A / Race 6)), this protein is UDP-N-acetylmuramate--L-alanine ligase.